Reading from the N-terminus, the 548-residue chain is Biotin-dependent acetyl-/propionyl-coenzyme A carboxylase beta5 subunit (548 aa).

Residues 1–23 (MTSVTDRSAHSAERSTEHTIDIH) form a disordered region. Residues 7-21 (RSAHSAERSTEHTID) are compositionally biased toward basic and acidic residues. One can recognise a CoA carboxyltransferase N-terminal domain in the interval 25–281 (TAGKLAELHK…NNSTDAPRYQ (257 aa)). The CoA carboxyltransferase C-terminal domain maps to 295-541 (DEDLELDTLI…ERKIAQLPPK (247 aa)).

The protein belongs to the AccD/PCCB family. Forms homohexamers. The biotin-dependent acyl-CoA carboxylase complex is composed of AccA3, which contains the biotin carboxylase (BC) and biotin carboxyl carrier protein (BCCP) domains, and AccD5, which contains the carboxyl transferase (CT) domain. The AccA3/AccD5 complex forms a dodecamer, and can associate with the epsilon subunit AccE5 (Rv3280), which stimulates carboxylation by the complex. Is also part of the long-chain acyl-CoA carboxylase (LCC) complex, which is composed of AccA3, AccD4, AccD5 and AccE5. The four subunits are essential for activity, but AccD5, together with AccE5, probably plays a structural role rather than a catalytic one.

The catalysed reaction is N(6)-carboxybiotinyl-L-lysyl-[protein] + acetyl-CoA = N(6)-biotinyl-L-lysyl-[protein] + malonyl-CoA. The enzyme catalyses N(6)-carboxybiotinyl-L-lysyl-[protein] + propanoyl-CoA = methylmalonyl-CoA + N(6)-biotinyl-L-lysyl-[protein]. It functions in the pathway lipid metabolism; mycolic acid biosynthesis. With respect to regulation, carboxylase activity of the AccA3/AccD5 complex is stimulated by interaction with AccE5. In terms of biological role, component of a biotin-dependent acyl-CoA carboxylase complex. This subunit transfers the CO2 from carboxybiotin to the CoA ester substrate. When associated with the alpha3 subunit AccA3, is involved in the carboxylation of acetyl-CoA and propionyl-CoA, with a preference for propionyl-CoA. Is also required for the activity of the long-chain acyl-CoA carboxylase (LCC) complex. This chain is Biotin-dependent acetyl-/propionyl-coenzyme A carboxylase beta5 subunit, found in Mycobacterium tuberculosis (strain ATCC 25618 / H37Rv).